A 151-amino-acid chain; its full sequence is Neuroglobin (151 aa).

The 149-residue stretch at M1–D149 folds into the Globin domain. C46 and C55 form a disulfide bridge. Heme b is bound by residues H64 and H96.

The protein belongs to the globin family. Monomer. Homodimer and homotetramer; disulfide-linked. Mainly monomeric but also detected as part of homodimers and homotetramers. Interacts with 14-3-3 proteins; regulates the phosphorylation of NGB. Could interact (ferrous form) with G-alpha(i) proteins (GTP-bound form). Post-translationally, phosphorylated during hypoxia by ERK1/ERK2. Phosphorylation regulates the heme pocket hexacoordination preventing the association of His-64 with the heme metal center. Thereby, promotes the access of dioxygen and nitrite to the heme and stimulates the nitrite reductase activity. Phosphorylation during hypoxia is stabilized by 14-3-3 proteins. In terms of processing, an intramolecular Cys-46/Cys-55 disulfide bond, not necessarily present in orthologs, regulates the heme pocket hexacoordination preventing the association of His-64 with the heme metal center. Thereby, promotes the access of dioxygen and nitrite to the heme and stimulates the nitrite reductase activity. As to expression, predominantly expressed in brain, the strongest expression is seen in the frontal lobe, the subthalamic nucleus and the thalamus.

Its subcellular location is the cytoplasm. The protein resides in the cytosol. The protein localises to the mitochondrion matrix. The catalysed reaction is Fe(III)-heme b-[protein] + nitric oxide + H2O = Fe(II)-heme b-[protein] + nitrite + 2 H(+). In terms of biological role, monomeric globin with a bis-histidyl six-coordinate heme-iron atom through which it can bind dioxygen, carbon monoxide and nitric oxide. Could help transport oxygen and increase its availability to the metabolically active neuronal tissues, though its low quantity in tissues as well as its high affinity for dioxygen, which may limit its oxygen-releasing ability, argue against it. The ferrous/deoxygenated form exhibits a nitrite reductase activity and it could produce nitric oxide which in turn inhibits cellular respiration in response to hypoxia. In its ferrous/deoxygenated state, it may also exhibit GDI (Guanine nucleotide Dissociation Inhibitor) activity toward heterotrimeric G-alpha proteins, thereby regulating signal transduction to facilitate neuroprotective responses in the wake of hypoxia and associated oxidative stress. This chain is Neuroglobin, found in Homo sapiens (Human).